Reading from the N-terminus, the 494-residue chain is Guanosine-5'-triphosphate,3'-diphosphate pyrophosphatase (494 aa).

This sequence belongs to the GppA/Ppx family. GppA subfamily.

The enzyme catalyses guanosine 3'-diphosphate 5'-triphosphate + H2O = guanosine 3',5'-bis(diphosphate) + phosphate + H(+). It participates in purine metabolism; ppGpp biosynthesis; ppGpp from GTP: step 2/2. Its function is as follows. Catalyzes the conversion of pppGpp to ppGpp. Guanosine pentaphosphate (pppGpp) is a cytoplasmic signaling molecule which together with ppGpp controls the 'stringent response', an adaptive process that allows bacteria to respond to amino acid starvation, resulting in the coordinated regulation of numerous cellular activities. The chain is Guanosine-5'-triphosphate,3'-diphosphate pyrophosphatase from Shigella flexneri serotype 5b (strain 8401).